The chain runs to 102 residues: RNA-binding protein Hfq (102 aa).

One can recognise a Sm domain in the interval 9 to 68 (DPFLNALRRERVPVSIYLVNGIKLQGQIESFDQFVILLKNTVSQMVYKHAISTVVPSRPV). A disordered region spans residues 63–102 (VPSRPVSHHSNNAGGGASNNYHHGSNAQGSTAQQDSEETE). The span at 70–88 (HHSNNAGGGASNNYHHGSN) shows a compositional bias: low complexity.

It belongs to the Hfq family. Homohexamer.

RNA chaperone that binds small regulatory RNA (sRNAs) and mRNAs to facilitate mRNA translational regulation in response to envelope stress, environmental stress and changes in metabolite concentrations. Also binds with high specificity to tRNAs. In Salmonella agona (strain SL483), this protein is RNA-binding protein Hfq.